We begin with the raw amino-acid sequence, 401 residues long: Pectate lyase (401 aa).

The signal sequence occupies residues 1–20 (MATTILPLILFISSLAIASS). N38 carries an N-linked (GlcNAc...) asparagine glycan. Ca(2+)-binding residues include D199, D223, and D227. R279 is a catalytic residue.

It belongs to the polysaccharide lyase 1 family. Requires Ca(2+) as cofactor. Expressed in sites of vascular differentiation and in new primordia on the flank of the shoot meristem.

It carries out the reaction Eliminative cleavage of (1-&gt;4)-alpha-D-galacturonan to give oligosaccharides with 4-deoxy-alpha-D-galact-4-enuronosyl groups at their non-reducing ends.. It participates in glycan metabolism; pectin degradation; 2-dehydro-3-deoxy-D-gluconate from pectin: step 2/5. Its function is as follows. Involved in the degradation of pectin. May assist in the removal and modification of an existing pectin matrix in order to allow the deposition of newly synthesized walls polymers for a specialized function or to create an architecture that is extensible. This Zinnia elegans (Garden zinnia) protein is Pectate lyase.